A 71-amino-acid chain; its full sequence is Small ribosomal subunit protein bS21 (71 aa).

It belongs to the bacterial ribosomal protein bS21 family.

The polypeptide is Small ribosomal subunit protein bS21 (Cellvibrio japonicus (strain Ueda107) (Pseudomonas fluorescens subsp. cellulosa)).